Here is a 115-residue protein sequence, read N- to C-terminus: Putative HNH nuclease YajD (115 aa).

The HNH domain maps to 27–75 (CGRCSREFVYSNLRELTVHHIDHDHTNNPEDGSNWELLCLYCHDHEHSK).

Belongs to the HNH nuclease family.

This chain is Putative HNH nuclease YajD (yajD), found in Escherichia coli O157:H7.